A 335-amino-acid polypeptide reads, in one-letter code: Ubiquinol oxidase 1b, mitochondrial (335 aa).

A mitochondrion-targeting transit peptide spans 1–47; it reads MSSRMAGATLLRHLGPRLFAAEPVYSGLAASARGVMPAAARIFPARM. The chain crosses the membrane as a helical span at residues 160-180; the sequence is ALLLETVAGVPGMVGGMLLHL. The Fe cation site is built by Glu-164, Glu-203, and His-206. A helical membrane pass occupies residues 222–242; it reads ALVLAAQGVFFNAYFVGYLVS. 3 residues coordinate Fe cation: Glu-254, Glu-305, and His-308.

The protein belongs to the alternative oxidase family. Fe cation serves as cofactor.

It is found in the mitochondrion inner membrane. The enzyme catalyses 2 a ubiquinol + O2 = 2 a ubiquinone + 2 H2O. In terms of biological role, catalyzes the cyanide-resistant oxidation of ubiquinol and the reduction of molecular oxygen to water, but does not translocate protons and consequently is not linked to oxidative phosphorylation. May increase respiration when the cytochrome respiratory pathway is restricted, or in response to low temperatures. The polypeptide is Ubiquinol oxidase 1b, mitochondrial (Oryza sativa subsp. japonica (Rice)).